The chain runs to 230 residues: Cytidylate kinase (230 aa).

Residue glycine 10–threonine 18 coordinates ATP.

This sequence belongs to the cytidylate kinase family. Type 1 subfamily.

It localises to the cytoplasm. The catalysed reaction is CMP + ATP = CDP + ADP. It catalyses the reaction dCMP + ATP = dCDP + ADP. The polypeptide is Cytidylate kinase (Leptospira borgpetersenii serovar Hardjo-bovis (strain JB197)).